We begin with the raw amino-acid sequence, 425 residues long: 3-deoxy-D-manno-octulosonic acid transferase (425 aa).

The chain crosses the membrane as a helical; Signal-anchor span at residues glutamate 3 to valine 23. Glutamate 60 serves as the catalytic Proton acceptor. Residues proline 268–arginine 269, methionine 309–glutamate 311, and asparagine 335–glutamate 338 contribute to the CMP site.

Belongs to the glycosyltransferase group 1 family. Glycosyltransferase 30 subfamily.

The protein resides in the cell inner membrane. The enzyme catalyses lipid IVA (E. coli) + CMP-3-deoxy-beta-D-manno-octulosonate = alpha-Kdo-(2-&gt;6)-lipid IVA (E. coli) + CMP + H(+). It carries out the reaction alpha-Kdo-(2-&gt;6)-lipid IVA (E. coli) + CMP-3-deoxy-beta-D-manno-octulosonate = alpha-Kdo-(2-&gt;4)-alpha-Kdo-(2-&gt;6)-lipid IVA (E. coli) + CMP + H(+). Its pathway is glycolipid biosynthesis; KDO(2)-lipid A biosynthesis; KDO(2)-lipid A from CMP-3-deoxy-D-manno-octulosonate and lipid IV(A): step 1/4. The protein operates within glycolipid biosynthesis; KDO(2)-lipid A biosynthesis; KDO(2)-lipid A from CMP-3-deoxy-D-manno-octulosonate and lipid IV(A): step 2/4. It functions in the pathway bacterial outer membrane biogenesis; LPS core biosynthesis. Its function is as follows. Involved in lipopolysaccharide (LPS) biosynthesis. Catalyzes the transfer of two 3-deoxy-D-manno-octulosonate (Kdo) residues from CMP-Kdo to lipid IV(A), the tetraacyldisaccharide-1,4'-bisphosphate precursor of lipid A. The protein is 3-deoxy-D-manno-octulosonic acid transferase (waaA) of Escherichia coli O157:H7.